Reading from the N-terminus, the 151-residue chain is UPF0178 protein Pfl01_5469 (151 aa).

The protein belongs to the UPF0178 family.

This is UPF0178 protein Pfl01_5469 from Pseudomonas fluorescens (strain Pf0-1).